Here is a 675-residue protein sequence, read N- to C-terminus: INO80 complex subunit D (675 aa).

Disordered stretches follow at residues 1–39 (MNNN…NVNQ), 183–203 (TGNN…NSTP), 274–324 (LKQK…ERQV), 473–523 (DSNK…KLNK), and 627–675 (VPVT…TMIS). Low complexity-rich tracts occupy residues 282 to 318 (QQLQ…QLQI), 482 to 519 (NNDN…NNNN), and 634 to 648 (NQNN…TNNS). Basic and acidic residues predominate over residues 664-675 (EILKDSDNTMIS).

This sequence belongs to the INO80D family. As to quaternary structure, component of the chromatin-remodeling INO80 complex.

The protein resides in the nucleus. Its function is as follows. Putative regulatory component of the chromatin remodeling INO80 complex which is involved in transcriptional regulation, DNA replication and probably DNA repair. The chain is INO80 complex subunit D from Dictyostelium discoideum (Social amoeba).